The primary structure comprises 171 residues: SPbeta prophage-derived uncharacterized protein YokC (171 aa).

The chain is SPbeta prophage-derived uncharacterized protein YokC (yokC) from Bacillus subtilis (strain 168).